The following is a 585-amino-acid chain: uncharacterized protein (585 aa).

The next 6 helical transmembrane spans lie at 18–38 (FMWS…YPII), 55–75 (AAWV…ATFF), 128–148 (FFLS…AISL), 150–170 (VMFY…PFLA), 238–258 (IWSA…VALL), and 276–296 (VAFF…GFVI). In terms of domain architecture, ABC transmembrane type-1 spans 18-301 (FMWSLLAMLL…LGFVINMFSQ (284 aa)). Residues 335–570 (VHFKNVSLAY…GGYYKKIYDL (236 aa)) enclose the ABC transporter domain. An ATP-binding site is contributed by 369–376 (GPTGSGKS).

It belongs to the ABC transporter superfamily.

It localises to the cell membrane. This is an uncharacterized protein from Bacillus subtilis (strain 168).